The chain runs to 626 residues: DNA primase (626 aa).

A CHC2-type zinc finger spans residues cysteine 39–cysteine 63. The Toprim domain occupies glutamate 264–glycine 346. The Mg(2+) site is built by glutamate 270, aspartate 314, and aspartate 316.

The protein belongs to the DnaG primase family. Monomer. Interacts with DnaB. Requires Zn(2+) as cofactor. The cofactor is Mg(2+).

It carries out the reaction ssDNA + n NTP = ssDNA/pppN(pN)n-1 hybrid + (n-1) diphosphate.. RNA polymerase that catalyzes the synthesis of short RNA molecules used as primers for DNA polymerase during DNA replication. In Listeria monocytogenes serovar 1/2a (strain ATCC BAA-679 / EGD-e), this protein is DNA primase.